The primary structure comprises 869 residues: Bifunctional uridylyltransferase/uridylyl-removing enzyme (869 aa).

A uridylyltransferase region spans residues 1-332 (MTATPADRPD…QFDGEAVPVQ (332 aa)). Residues 333 to 691 (LDAGFSLRRG…RRAVPDNDAL (359 aa)) form a uridylyl-removing region. Residues 450-572 (VDQHTLMVLR…VGTRERLDYL (123 aa)) form the HD domain. 2 ACT domains span residues 692–771 (EVFV…PSRR) and 798–869 (RISL…LDPT).

The protein belongs to the GlnD family. Requires Mg(2+) as cofactor.

The catalysed reaction is [protein-PII]-L-tyrosine + UTP = [protein-PII]-uridylyl-L-tyrosine + diphosphate. The enzyme catalyses [protein-PII]-uridylyl-L-tyrosine + H2O = [protein-PII]-L-tyrosine + UMP + H(+). Its activity is regulated as follows. Uridylyltransferase (UTase) activity is inhibited by glutamine, while glutamine activates uridylyl-removing (UR) activity. Its function is as follows. Modifies, by uridylylation and deuridylylation, the PII regulatory proteins (GlnB and homologs), in response to the nitrogen status of the cell that GlnD senses through the glutamine level. Under low glutamine levels, catalyzes the conversion of the PII proteins and UTP to PII-UMP and PPi, while under higher glutamine levels, GlnD hydrolyzes PII-UMP to PII and UMP (deuridylylation). Thus, controls uridylylation state and activity of the PII proteins, and plays an important role in the regulation of nitrogen assimilation and metabolism. This is Bifunctional uridylyltransferase/uridylyl-removing enzyme from Xanthomonas campestris pv. campestris (strain 8004).